The sequence spans 335 residues: Urokinase plasminogen activator surface receptor (335 aa).

The first 22 residues, 1 to 22, serve as a signal peptide directing secretion; that stretch reads MGHPPLLPLLLLLHTCVPASWG. 3 consecutive UPAR/Ly6 domains span residues 23 to 114, 115 to 213, and 214 to 305; these read LRCM…RSRY, LECI…PQNG, and RQCY…YRSG. 3 disulfide bridges follow: Cys25–Cys46, Cys28–Cys34, and Cys39–Cys67. Residue Asn74 is glycosylated (N-linked (GlcNAc...) asparagine). Intrachain disulfides connect Cys93-Cys98, Cys117-Cys144, Cys120-Cys127, Cys137-Cys169, Cys175-Cys192, Cys193-Cys198, Cys216-Cys244, Cys219-Cys227, Cys237-Cys263, Cys269-Cys287, and Cys288-Cys293. N-linked (GlcNAc...) asparagine glycans are attached at residues Asn184, Asn194, Asn222, and Asn255. Gly305 carries the GPI-anchor amidated glycine lipid modification. A propeptide spans 306–335 (removed in mature form); the sequence is AAPQPGPAHLSLTITLLMTARLWGGTLLWT.

As to quaternary structure, monomer. Interacts with MRC2. Interacts (via the UPAR/Ly6 domains) with SRPX2. Interacts with FAP (seprase); the interaction occurs at the cell surface of invadopodia membrane. Interacts with SORL1 (via N-terminal ectodomain); this interaction decreases PLAUR internalization. The ternary complex composed of PLAUR-PLAU-SERPINE1 also interacts with SORL1. Interacts with CD82; this interaction prevents PLAUR from binding to its high affinity ligand PLAU. In terms of tissue distribution, expressed in neurons of the rolandic area of the brain (at protein level). Expressed in the brain.

It is found in the cell membrane. It localises to the cell projection. Its subcellular location is the invadopodium membrane. The protein localises to the secreted. In terms of biological role, acts as a receptor for urokinase plasminogen activator. Plays a role in localizing and promoting plasmin formation. Mediates the proteolysis-independent signal transduction activation effects of U-PA. It is subject to negative-feedback regulation by U-PA which cleaves it into an inactive form. The sequence is that of Urokinase plasminogen activator surface receptor (PLAUR) from Homo sapiens (Human).